Reading from the N-terminus, the 355-residue chain is Polyferredoxin protein FwdF (355 aa).

8 consecutive 4Fe-4S ferredoxin-type domains span residues 24–53, 64–93, 108–137, 147–176, 187–216, 235–264, 267–296, and 304–333; these read RELC…MGPL, PKLD…LKIN, RDIK…VERE, GEIN…LKYN, TDIE…VICY, GKTV…VEKP, GELI…FPKP, and PRII…VKRT. Positions 33, 36, 39, 43, 73, 76, 79, 83, 117, 120, 123, 127, 156, 159, 162, 166, 196, 199, 202, 206, 244, 247, 250, 254, 276, 279, 282, 286, 313, 316, 319, and 323 each coordinate [4Fe-4S] cluster.

[4Fe-4S] cluster is required as a cofactor.

In Methanocaldococcus jannaschii (strain ATCC 43067 / DSM 2661 / JAL-1 / JCM 10045 / NBRC 100440) (Methanococcus jannaschii), this protein is Polyferredoxin protein FwdF (fwdF).